A 322-amino-acid polypeptide reads, in one-letter code: Probable transposase for insertion sequence element ISA1214 (322 aa).

Belongs to the transposase 11 family.

Functionally, involved in the transposition of the insertion sequence ISA1214. This is Probable transposase for insertion sequence element ISA1214 from Archaeoglobus fulgidus (strain ATCC 49558 / DSM 4304 / JCM 9628 / NBRC 100126 / VC-16).